A 280-amino-acid polypeptide reads, in one-letter code: DegV domain-containing protein M6_Spy1440 (280 aa).

One can recognise a DegV domain in the interval 3–280; the sequence is WKIVTDSGCD…DGGLLMGYEI (278 aa). Positions 63 and 91 each coordinate hexadecanoate.

In terms of biological role, may bind long-chain fatty acids, such as palmitate, and may play a role in lipid transport or fatty acid metabolism. The chain is DegV domain-containing protein M6_Spy1440 from Streptococcus pyogenes serotype M6 (strain ATCC BAA-946 / MGAS10394).